A 406-amino-acid polypeptide reads, in one-letter code: Imidazolonepropionase (406 aa).

Positions 74 and 76 each coordinate Fe(3+). 2 residues coordinate Zn(2+): histidine 74 and histidine 76. Arginine 83, tyrosine 146, and histidine 179 together coordinate 4-imidazolone-5-propanoate. Tyrosine 146 is a binding site for N-formimidoyl-L-glutamate. Histidine 240 contributes to the Fe(3+) binding site. Residue histidine 240 participates in Zn(2+) binding. Glutamate 243 contributes to the 4-imidazolone-5-propanoate binding site. Aspartate 314 serves as a coordination point for Fe(3+). Aspartate 314 is a Zn(2+) binding site. N-formimidoyl-L-glutamate-binding residues include asparagine 316 and glycine 318. A 4-imidazolone-5-propanoate-binding site is contributed by serine 319.

Belongs to the metallo-dependent hydrolases superfamily. HutI family. Zn(2+) is required as a cofactor. The cofactor is Fe(3+).

The protein localises to the cytoplasm. It carries out the reaction 4-imidazolone-5-propanoate + H2O = N-formimidoyl-L-glutamate. It participates in amino-acid degradation; L-histidine degradation into L-glutamate; N-formimidoyl-L-glutamate from L-histidine: step 3/3. Catalyzes the hydrolytic cleavage of the carbon-nitrogen bond in imidazolone-5-propanoate to yield N-formimidoyl-L-glutamate. It is the third step in the universal histidine degradation pathway. The protein is Imidazolonepropionase of Kosmotoga olearia (strain ATCC BAA-1733 / DSM 21960 / TBF 19.5.1).